A 69-amino-acid chain; its full sequence is Large ribosomal subunit protein uL29 (69 aa).

Belongs to the universal ribosomal protein uL29 family.

The polypeptide is Large ribosomal subunit protein uL29 (Synechococcus sp. (strain WH7803)).